Consider the following 595-residue polypeptide: UvrABC system protein C (595 aa).

A GIY-YIG domain is found at 14-91 (NNPGCYLHKD…IQENMPKFNI (78 aa)). In terms of domain architecture, UVR spans 196–231 (DKIVNQLKAKMKDMSDQMEFERAAEYRDLIEAVSTL).

The protein belongs to the UvrC family. Interacts with UvrB in an incision complex.

It localises to the cytoplasm. Functionally, the UvrABC repair system catalyzes the recognition and processing of DNA lesions. UvrC both incises the 5' and 3' sides of the lesion. The N-terminal half is responsible for the 3' incision and the C-terminal half is responsible for the 5' incision. The sequence is that of UvrABC system protein C from Streptococcus thermophilus (strain ATCC BAA-250 / LMG 18311).